The primary structure comprises 134 residues: Inner membrane protein YqjE (134 aa).

Residues 1–55 (MADTHHAQGPGKSVLGIGQRIVSIMVEMVETRLRLAVVELEEEKANLFQLLLMLG) lie on the Cytoplasmic side of the membrane. A helical membrane pass occupies residues 56-76 (LTMLFAAFGLMSLMVLIIWAV). Over 77-83 (DPQYRLN) the chain is Periplasmic. Residues 84 to 104 (AMIATTVVLLLLALIGGIWTL) form a helical membrane-spanning segment. Over 105-134 (RKSRKSTLLRHTRHELANDRQLLEEESREQ) the chain is Cytoplasmic.

The protein localises to the cell inner membrane. This chain is Inner membrane protein YqjE (yqjE), found in Escherichia coli O157:H7.